The chain runs to 133 residues: Arginine decarboxylase proenzyme (133 aa).

The active-site Schiff-base intermediate with substrate; via pyruvic acid is Ser81. Ser81 bears the Pyruvic acid (Ser); by autocatalysis mark. His86 serves as the catalytic Proton acceptor; for processing activity. Cys101 acts as the Proton donor; for catalytic activity in catalysis.

Belongs to the prokaryotic AdoMetDC family. Type 1 subfamily. Heterooctamer of four alpha and four beta chains arranged as a tetramer of alpha/beta heterodimers. The cofactor is pyruvate. Is synthesized initially as an inactive proenzyme. Formation of the active enzyme involves a self-maturation process in which the active site pyruvoyl group is generated from an internal serine residue via an autocatalytic post-translational modification. Two non-identical subunits are generated from the proenzyme in this reaction, and the pyruvate is formed at the N-terminus of the alpha chain, which is derived from the carboxyl end of the proenzyme. The post-translation cleavage follows an unusual pathway, termed non-hydrolytic serinolysis, in which the side chain hydroxyl group of the serine supplies its oxygen atom to form the C-terminus of the beta chain, while the remainder of the serine residue undergoes an oxidative deamination to produce ammonia and the pyruvoyl group blocking the N-terminus of the alpha chain.

The catalysed reaction is L-arginine + H(+) = agmatine + CO2. The protein operates within amine and polyamine biosynthesis; agmatine biosynthesis; agmatine from L-arginine: step 1/1. In terms of biological role, specifically catalyzes the decarboxylation of L-arginine to agmatine. Has no S-adenosylmethionine decarboxylase (AdoMetDC) activity. The polypeptide is Arginine decarboxylase proenzyme (Pyrobaculum arsenaticum (strain DSM 13514 / JCM 11321 / PZ6)).